The following is a 616-amino-acid chain: Proline--tRNA ligase (616 aa).

This sequence belongs to the class-II aminoacyl-tRNA synthetase family. ProS type 1 subfamily. In terms of assembly, homodimer.

The protein localises to the cytoplasm. It catalyses the reaction tRNA(Pro) + L-proline + ATP = L-prolyl-tRNA(Pro) + AMP + diphosphate. Catalyzes the attachment of proline to tRNA(Pro) in a two-step reaction: proline is first activated by ATP to form Pro-AMP and then transferred to the acceptor end of tRNA(Pro). As ProRS can inadvertently accommodate and process non-cognate amino acids such as alanine and cysteine, to avoid such errors it has two additional distinct editing activities against alanine. One activity is designated as 'pretransfer' editing and involves the tRNA(Pro)-independent hydrolysis of activated Ala-AMP. The other activity is designated 'posttransfer' editing and involves deacylation of mischarged Ala-tRNA(Pro). The misacylated Cys-tRNA(Pro) is not edited by ProRS. In Lactococcus lactis subsp. cremoris (strain MG1363), this protein is Proline--tRNA ligase.